A 351-amino-acid chain; its full sequence is Anthranilate phosphoribosyltransferase (351 aa).

5-phospho-alpha-D-ribose 1-diphosphate-binding positions include Gly90, 93-94 (GD), Thr98, 100-103 (NIST), 118-126 (KHGNRSASG), and Ser130. Residue Gly90 participates in anthranilate binding. Ser102 is a binding site for Mg(2+). Asn121 is an anthranilate binding site. Arg176 provides a ligand contact to anthranilate. Mg(2+) contacts are provided by Asp235 and Glu236.

This sequence belongs to the anthranilate phosphoribosyltransferase family. As to quaternary structure, homodimer. Mg(2+) is required as a cofactor.

It carries out the reaction N-(5-phospho-beta-D-ribosyl)anthranilate + diphosphate = 5-phospho-alpha-D-ribose 1-diphosphate + anthranilate. Its pathway is amino-acid biosynthesis; L-tryptophan biosynthesis; L-tryptophan from chorismate: step 2/5. Catalyzes the transfer of the phosphoribosyl group of 5-phosphorylribose-1-pyrophosphate (PRPP) to anthranilate to yield N-(5'-phosphoribosyl)-anthranilate (PRA). In Prochlorococcus marinus (strain MIT 9313), this protein is Anthranilate phosphoribosyltransferase.